Reading from the N-terminus, the 338-residue chain is 1-aminocyclopropane-1-carboxylate deaminase (338 aa).

Lys-51 bears the N6-(pyridoxal phosphate)lysine mark. Ser-78 functions as the Nucleophile in the catalytic mechanism.

It belongs to the ACC deaminase/D-cysteine desulfhydrase family. In terms of assembly, homotrimer. Pyridoxal 5'-phosphate is required as a cofactor.

The enzyme catalyses 1-aminocyclopropane-1-carboxylate + H2O = 2-oxobutanoate + NH4(+). Functionally, catalyzes a cyclopropane ring-opening reaction, the irreversible conversion of 1-aminocyclopropane-1-carboxylate (ACC) to ammonia and alpha-ketobutyrate. Allows growth on ACC as a nitrogen source. This Pseudomonas putida (Arthrobacter siderocapsulatus) protein is 1-aminocyclopropane-1-carboxylate deaminase.